The primary structure comprises 449 residues: Gamma-aminobutyric acid receptor subunit delta (449 aa).

A signal peptide spans 1 to 24 (MDVLGWLLLPLLLLCTQPHHGARA). Residues 25–251 (MNDIGDYVGS…QLRRNRGVYI (227 aa)) lie on the Extracellular side of the membrane. 2 N-linked (GlcNAc...) asparagine glycosylation sites follow: N103 and N106. A disulfide bridge links C164 with C178. The helical transmembrane segment at 252–271 (IQSYMPSVLLVAMSWVSFWI) threads the bilayer. The Cytoplasmic segment spans residues 272-275 (SQAA). A helical transmembrane segment spans residues 276–298 (VPARVSLGITTVLTMTTLMVSAR). Over 299–308 (SSLPRASAIK) the chain is Extracellular. The helical transmembrane segment at 309–331 (ALDVYFWICYVFVFAALVEYAFA) threads the bilayer. Residues 332 to 423 (HFNADYRKKR…SRLKPIDADT (92 aa)) are Cytoplasmic-facing. A Phosphoserine modification is found at S390. The chain crosses the membrane as a helical span at residues 424–446 (IDIYARAVFPAAFAAVNIIYWAA). The Extracellular segment spans residues 447 to 449 (YTM).

The protein belongs to the ligand-gated ion channel (TC 1.A.9) family. Gamma-aminobutyric acid receptor (TC 1.A.9.5) subfamily. GABRD sub-subfamily. In terms of assembly, heteropentamer, formed by a combination of alpha (GABRA1-6), beta (GABRB1-3), gamma (GABRG1-3), delta (GABRD), epsilon (GABRE), rho (GABRR1-3), pi (GABRP) and theta (GABRQ) chains, each subunit exhibiting distinct physiological and pharmacological properties. Found in the brain, in cerebellar granule cells. Expressed in lungs, in alveolar epithelium.

Its subcellular location is the cell membrane. It catalyses the reaction chloride(in) = chloride(out). Functionally, delta subunit of the heteropentameric ligand-gated chloride channel gated by gamma-aminobutyric acid (GABA), a major inhibitory neurotransmitter in the brain. GABA-gated chloride channels, also named GABA(A) receptors (GABAAR), consist of five subunits arranged around a central pore and contain GABA active binding site(s) located at the alpha and beta subunit interface(s). When activated by GABA, GABAARs selectively allow the flow of chloride anions across the cell membrane down their electrochemical gradient. GABAARs containing delta/GABRD subunits are predominantly expressed and located in extrasynaptic or perisynaptic positions on hippocampus and cerebellar granule cells, and contribute to the tonic GABAergic inhibition. GABAAR containing alpha-4-beta-3-delta subunits can simultaneously bind GABA and histamine where histamine binds at the interface of two neighboring beta subunits, which may be involved in the regulation of sleep and wakefulness. The polypeptide is Gamma-aminobutyric acid receptor subunit delta (Rattus norvegicus (Rat)).